A 494-amino-acid polypeptide reads, in one-letter code: Ribonuclease H (494 aa).

Disordered stretches follow at residues 79 to 148 (NRRR…APPP) and 205 to 231 (RSGL…VGLR). 2 stretches are compositionally biased toward polar residues: residues 84-100 (GSTS…NQLA) and 131-143 (PTTS…TRTS). One can recognise an RNase H type-1 domain in the interval 272 to 488 (SSVPQVVYVD…ADVLAVAGAR (217 aa)). Asp281, Glu325, Asp374, and Asp480 together coordinate Mg(2+).

This sequence belongs to the RNase H family. As to quaternary structure, monomer. Mg(2+) is required as a cofactor.

The catalysed reaction is Endonucleolytic cleavage to 5'-phosphomonoester.. Its function is as follows. Endonuclease that specifically degrades the RNA of RNA-DNA hybrids. This chain is Ribonuclease H (RNH1), found in Crithidia fasciculata.